A 326-amino-acid polypeptide reads, in one-letter code: Phospho-N-acetylmuramoyl-pentapeptide-transferase (326 aa).

9 helical membrane-spanning segments follow: residues 3–23 (ISIS…PAFI), 51–71 (TMGG…FALF), 79–99 (VGMI…DDFL), 115–135 (LALQ…GGDI), 138–158 (VFGY…FWLV), 169–189 (GVDG…GVIA), 195–215 (MDIL…FIFN), 221–243 (VFMG…MALH), and 306–326 (FFFW…LYLM).

It belongs to the glycosyltransferase 4 family. MraY subfamily. Mg(2+) is required as a cofactor.

Its subcellular location is the cell membrane. It carries out the reaction UDP-N-acetyl-alpha-D-muramoyl-L-alanyl-gamma-D-glutamyl-L-lysyl-D-alanyl-D-alanine + di-trans,octa-cis-undecaprenyl phosphate = Mur2Ac(oyl-L-Ala-gamma-D-Glu-L-Lys-D-Ala-D-Ala)-di-trans,octa-cis-undecaprenyl diphosphate + UMP. It participates in cell wall biogenesis; peptidoglycan biosynthesis. Catalyzes the initial step of the lipid cycle reactions in the biosynthesis of the cell wall peptidoglycan: transfers peptidoglycan precursor phospho-MurNAc-pentapeptide from UDP-MurNAc-pentapeptide onto the lipid carrier undecaprenyl phosphate, yielding undecaprenyl-pyrophosphoryl-MurNAc-pentapeptide, known as lipid I. The protein is Phospho-N-acetylmuramoyl-pentapeptide-transferase of Streptococcus pneumoniae (strain 70585).